We begin with the raw amino-acid sequence, 969 residues long: Protein translocase subunit SecA (969 aa).

ATP contacts are provided by residues Gln-99, 117-121 (GEGKT), and Asp-631.

It belongs to the SecA family. In terms of assembly, monomer and homodimer. Part of the essential Sec protein translocation apparatus which comprises SecA, SecYEG and auxiliary proteins SecDF. Other proteins may also be involved.

It is found in the cell inner membrane. The protein localises to the cytoplasm. The enzyme catalyses ATP + H2O + cellular proteinSide 1 = ADP + phosphate + cellular proteinSide 2.. In terms of biological role, part of the Sec protein translocase complex. Interacts with the SecYEG preprotein conducting channel. Has a central role in coupling the hydrolysis of ATP to the transfer of proteins into and across the cell membrane, serving as an ATP-driven molecular motor driving the stepwise translocation of polypeptide chains across the membrane. The sequence is that of Protein translocase subunit SecA from Chlamydia trachomatis serovar A (strain ATCC VR-571B / DSM 19440 / HAR-13).